A 734-amino-acid chain; its full sequence is Photosystem I P700 chlorophyll a apoprotein A2 (734 aa).

8 consecutive transmembrane segments (helical) span residues 46–69 (IFASHFGQLAIIFLWTSGNLFHVA), 135–158 (LYIGALFLMFCSALFLIAGRLHLQ), 175–199 (LNHHLSGLFGVSSLAWTGHLVHVAL), 273–291 (IAHHHLAIALVFLIAGHMY), 330–353 (LHFQLGLALASLGVVTSLVAQHMY), 369–395 (AALYTHHQYIAGFIMTGAFAHGAIFFI), 417–439 (AIISHLSWASLFLGFHTLGLYVH), and 517–535 (FLVHHAIALGLHTTTLILV). Cys-559 and Cys-568 together coordinate [4Fe-4S] cluster. 2 helical membrane-spanning segments follow: residues 575–596 (AFYLAVFWMLNTVGWVTFYWHW) and 643–665 (LSVWAWMFLFGHLVWATGFMFLI). Chlorophyll a contacts are provided by His-654, Met-662, and Tyr-670. Trp-671 serves as a coordination point for phylloquinone. A helical membrane pass occupies residues 707 to 727 (LVGLVHFSVGYIFTYAAFLIA).

This sequence belongs to the PsaA/PsaB family. As to quaternary structure, the PsaA/B heterodimer binds the P700 chlorophyll special pair and subsequent electron acceptors. PSI consists of a core antenna complex that captures photons, and an electron transfer chain that converts photonic excitation into a charge separation. The eukaryotic PSI reaction center is composed of at least 11 subunits. P700 is a chlorophyll a/chlorophyll a' dimer, A0 is one or more chlorophyll a, A1 is one or both phylloquinones and FX is a shared 4Fe-4S iron-sulfur center. is required as a cofactor.

The protein localises to the plastid. It is found in the chloroplast thylakoid membrane. The enzyme catalyses reduced [plastocyanin] + hnu + oxidized [2Fe-2S]-[ferredoxin] = oxidized [plastocyanin] + reduced [2Fe-2S]-[ferredoxin]. PsaA and PsaB bind P700, the primary electron donor of photosystem I (PSI), as well as the electron acceptors A0, A1 and FX. PSI is a plastocyanin-ferredoxin oxidoreductase, converting photonic excitation into a charge separation, which transfers an electron from the donor P700 chlorophyll pair to the spectroscopically characterized acceptors A0, A1, FX, FA and FB in turn. Oxidized P700 is reduced on the lumenal side of the thylakoid membrane by plastocyanin. This Gnetum parvifolium (Small-leaved jointfir) protein is Photosystem I P700 chlorophyll a apoprotein A2.